The chain runs to 314 residues: MPLGLRGKKKAAKSKEAARLVEGERSSGSQGVPGPPAPARKLVFHAQLAHGSATGRVEDFSSISELYAKIAGVFEIAPSEILFCTLNTPKIDMGKLLGGQLGLEDFIFAHVKGTKKEVNVYKSEDSLGLTITDNGVGYAFIKRIKDGSTIDSVKTICVGDHIECINGENIVGWRHFEVAKKLKELKKEELFTLQLIEPKKAFEIGPRSKAGKTSTEKIGTSRGTLRLRSKGPATVEELPSEAKAKAIGKVDDLLELYMGIRDIDLATTMFEAGKDKSNPDEFAVALDETLGDFAFPDEFLFDVWGAISDMKQGR.

Positions 1-12 (MPLGLRGKKKAA) are enriched in basic residues. The disordered stretch occupies residues 1–36 (MPLGLRGKKKAAKSKEAARLVEGERSSGSQGVPGPP). Residues 13 to 25 (KSKEAARLVEGER) show a composition bias toward basic and acidic residues. The 81-residue stretch at 117 to 197 (EVNVYKSEDS…EELFTLQLIE (81 aa)) folds into the PDZ domain.

Belongs to the GIPC family. Probably interacts with SEMA5A. In terms of tissue distribution, expressed in kidney and lung (at protein level).

It is found in the cytoplasm. The sequence is that of PDZ domain-containing protein GIPC2 (Gipc2) from Mus musculus (Mouse).